A 184-amino-acid polypeptide reads, in one-letter code: Flavodoxin FldP (184 aa).

The region spanning 4-176 is the Flavodoxin-like domain; the sequence is AVVVYFSGYG…TVKLYAARVA (173 aa). Residues 10 to 14 and 91 to 147 contribute to the FMN site; these read SGYGH and GFTN…SVGA.

It belongs to the FldP flavodoxin family. The cofactor is FMN.

Flavodoxins are low-potential electron donors to a number of redox enzymes. FldP protects the cell from oxidative stress and reactive oxygen species (ROS) damage, thereby expanding the capabilities of P.aeruginosa to thrive in hostile environments, and contributes to bacterial survival within the host. In vitro, is able to mediate ferredoxin-NADP(H) reductase (FNR)-driven cytochrome c reduction. This Pseudomonas aeruginosa (strain UCBPP-PA14) protein is Flavodoxin FldP.